An 801-amino-acid chain; its full sequence is Interleukin-4 receptor subunit alpha (801 aa).

The N-terminal stretch at 1-25 is a signal peptide; the sequence is MGWLCTKFLSSVSCLILLWVTGSGG. Residues 26–232 lie on the Extracellular side of the membrane; sequence IKVLGDPTCF…NHFQLPLLQR (207 aa). Cysteines 34 and 44 form a disulfide. Asn71 carries N-linked (GlcNAc...) asparagine glycosylation. A disulfide bond links Cys74 and Cys86. Residues 125-223 form the Fibronectin type-III domain; the sequence is APDNLTLHTN…EWSPSITWYN (99 aa). Asn128, Asn134, and Asn162 each carry an N-linked (GlcNAc...) asparagine glycan. Residue Ser164 is modified to Phosphoserine. N-linked (GlcNAc...) asparagine glycosylation is present at Asn176. Residues 212–216 carry the WSXWS motif motif; the sequence is WSEWS. The chain crosses the membrane as a helical span at residues 233 to 256; the sequence is LPLGVSISCICILLFCLTCYFSII. At 257–801 the chain is on the cytoplasmic side; sequence KIKKIWWDQI…PVGTLGVTVS (545 aa). The short motif at 262 to 270 is the Box 1 motif element; that stretch reads WWDQIPTPA. Residues 424 to 476 form a disordered region; the sequence is VGQSSMAESSSLLPSESGQASTSWACFPTGPSETTCQVTGQQPPHPDPERATG. A compositionally biased stretch (low complexity) spans 426–444; sequence QSSMAESSSLLPSESGQAS. The tract at residues 439–549 is required for IRS1 activation and IL4-induced cell growth; it reads ESGQASTSWA…ESWEQILHMS (111 aa). The span at 454-465 shows a compositional bias: polar residues; the sequence is PSETTCQVTGQQ. Tyr492 is modified (phosphotyrosine). The segment at 493-515 is disordered; the sequence is RSFSDFSSPAPNPGELASEQKQA. Positions 549 to 644 are required for IL4-induced gene expression; sequence SVLQHGTAGS…NSMPLFTFGL (96 aa). A phosphotyrosine mark is found at Tyr566, Tyr594, and Tyr622. Residues 698 to 703 carry the ITIM motif motif; the sequence is IVYSSL. The disordered stretch occupies residues 767–801; sequence RTPSNLSGVGKGPGHSPVPSQTTEVPVGTLGVTVS.

Belongs to the type I cytokine receptor family. Type 4 subfamily. The functional IL4 receptor is formed by initial binding of IL4 to IL4R. Subsequent recruitment to the complex of the common gamma chain, in immune cells, creates a type I receptor and, in non-immune cells, of IL13RA1 forms a type II receptor. IL4R can also interact with the IL13/IL13RA1 complex to form a similar type II receptor. Interacts with PIK3C3. Interacts with the SH2-containing phosphatases, PTPN6/SHIP1, PTPN11/SHIP2 and INPP5D/SHIP. Interacts with JAK1 through a Box 1-containing region; inhibited by SOCS5. Interacts with SOCS5; inhibits IL4 signaling. Interacts with JAK3. Interacts with CLM1. Interacts with IL13RA2. On IL4 binding, phosphorylated on C-terminal tyrosine residues. In terms of tissue distribution, isoform 2 is expressed in kidney, spleen, lung and liver.

It is found in the cell membrane. The protein localises to the secreted. Functionally, receptor for both interleukin 4 and interleukin 13. Couples to the JAK1/2/3-STAT6 pathway. The IL4 response is involved in promoting Th2 differentiation. The IL4/IL13 responses are involved in regulating IgE production and, chemokine and mucus production at sites of allergic inflammation. In certain cell types, can signal through activation of insulin receptor substrates, IRS1/IRS2. Its function is as follows. Isoform 2 (soluble form) inhibits IL4-induced spleen cell proliferation. This Rattus norvegicus (Rat) protein is Interleukin-4 receptor subunit alpha (Il4r).